We begin with the raw amino-acid sequence, 540 residues long: T-complex protein 1 subunit theta (540 aa).

Belongs to the TCP-1 chaperonin family. In terms of assembly, heterooligomeric complex of about 850 to 900 kDa that forms two stacked rings, 12 to 16 nm in diameter.

It localises to the cytoplasm. Its function is as follows. Molecular chaperone; assists the folding of proteins upon ATP hydrolysis. Known to play a role, in vitro, in the folding of actin and tubulin. In yeast may play a role in mitotic spindle formation. The protein is T-complex protein 1 subunit theta (CCT8) of Candida albicans (Yeast).